Consider the following 323-residue polypeptide: Beta-ketoacyl-[acyl-carrier-protein] synthase III (323 aa).

Catalysis depends on residues cysteine 113 and histidine 250. Residues 251–255 (QANRR) are ACP-binding. Asparagine 280 is an active-site residue.

This sequence belongs to the thiolase-like superfamily. FabH family. As to quaternary structure, homodimer.

Its subcellular location is the cytoplasm. The catalysed reaction is malonyl-[ACP] + acetyl-CoA + H(+) = 3-oxobutanoyl-[ACP] + CO2 + CoA. It participates in lipid metabolism; fatty acid biosynthesis. Catalyzes the condensation reaction of fatty acid synthesis by the addition to an acyl acceptor of two carbons from malonyl-ACP. Catalyzes the first condensation reaction which initiates fatty acid synthesis and may therefore play a role in governing the total rate of fatty acid production. Possesses both acetoacetyl-ACP synthase and acetyl transacylase activities. Its substrate specificity determines the biosynthesis of branched-chain and/or straight-chain of fatty acids. The chain is Beta-ketoacyl-[acyl-carrier-protein] synthase III from Rhizobium meliloti (strain 1021) (Ensifer meliloti).